The primary structure comprises 425 residues: D-amino acid dehydrogenase 2 (425 aa).

FAD is bound at residue 3–17 (ITVVGAGIVGISTAY).

It belongs to the DadA oxidoreductase family. The cofactor is FAD.

The enzyme catalyses a D-alpha-amino acid + A + H2O = a 2-oxocarboxylate + AH2 + NH4(+). Oxidative deamination of D-amino acids. This is D-amino acid dehydrogenase 2 (dadA2) from Ralstonia nicotianae (strain ATCC BAA-1114 / GMI1000) (Ralstonia solanacearum).